The following is a 272-amino-acid chain: MTTLACQKLAPHPESPRHQHAGPWLVWLHGLLGSGQDWLPVAQLCGDYPSLLIDLPGHGQSVSLSADGFADISRQLSQTLQANGIREYWLAGYSLGGRIAIYHACYGRHHGLQGLLVEGGNLGLENAELRQARLQQDRQWAQRFRQEPLPQVLDDWYQQAVFADLDPQQREQLVLLRADNHGTAVAEMLEATSLGHQPWLLPALQRLNVPYTYLCGDRDHKFLQLAQQYRLPLHTLARAGHNAHRANPGAFAAQVLAFLSQSSCLPPSSLSR.

This sequence belongs to the AB hydrolase superfamily. MenH family. In terms of assembly, monomer.

It carries out the reaction 5-enolpyruvoyl-6-hydroxy-2-succinyl-cyclohex-3-ene-1-carboxylate = (1R,6R)-6-hydroxy-2-succinyl-cyclohexa-2,4-diene-1-carboxylate + pyruvate. The protein operates within quinol/quinone metabolism; 1,4-dihydroxy-2-naphthoate biosynthesis; 1,4-dihydroxy-2-naphthoate from chorismate: step 3/7. It participates in quinol/quinone metabolism; menaquinone biosynthesis. Its function is as follows. Catalyzes a proton abstraction reaction that results in 2,5-elimination of pyruvate from 2-succinyl-5-enolpyruvyl-6-hydroxy-3-cyclohexene-1-carboxylate (SEPHCHC) and the formation of 2-succinyl-6-hydroxy-2,4-cyclohexadiene-1-carboxylate (SHCHC). This is 2-succinyl-6-hydroxy-2,4-cyclohexadiene-1-carboxylate synthase from Yersinia pseudotuberculosis serotype I (strain IP32953).